The following is a 461-amino-acid chain: L-seryl-tRNA(Sec) selenium transferase (461 aa).

At lysine 294 the chain carries N6-(pyridoxal phosphate)lysine.

This sequence belongs to the SelA family. Pyridoxal 5'-phosphate is required as a cofactor.

The protein resides in the cytoplasm. The catalysed reaction is L-seryl-tRNA(Sec) + selenophosphate + H(+) = L-selenocysteinyl-tRNA(Sec) + phosphate. Its pathway is aminoacyl-tRNA biosynthesis; selenocysteinyl-tRNA(Sec) biosynthesis; selenocysteinyl-tRNA(Sec) from L-seryl-tRNA(Sec) (bacterial route): step 1/1. Converts seryl-tRNA(Sec) to selenocysteinyl-tRNA(Sec) required for selenoprotein biosynthesis. The sequence is that of L-seryl-tRNA(Sec) selenium transferase from Actinobacillus pleuropneumoniae serotype 5b (strain L20).